Reading from the N-terminus, the 795-residue chain is Lon protease (795 aa).

The region spanning proline 7–leucine 213 is the Lon N-terminal domain. Glycine 379–serine 386 serves as a coordination point for ATP. The 181-residue stretch at aspartate 615–asparagine 795 folds into the Lon proteolytic domain. Active-site residues include serine 702 and lysine 745.

Belongs to the peptidase S16 family. As to quaternary structure, homohexamer. Organized in a ring with a central cavity.

It is found in the cytoplasm. It catalyses the reaction Hydrolysis of proteins in presence of ATP.. In terms of biological role, ATP-dependent serine protease that mediates the selective degradation of mutant and abnormal proteins as well as certain short-lived regulatory proteins. Required for cellular homeostasis and for survival from DNA damage and developmental changes induced by stress. Degrades polypeptides processively to yield small peptide fragments that are 5 to 10 amino acids long. Binds to DNA in a double-stranded, site-specific manner. The polypeptide is Lon protease (Mycoplasma pneumoniae (strain ATCC 29342 / M129 / Subtype 1) (Mycoplasmoides pneumoniae)).